A 229-amino-acid polypeptide reads, in one-letter code: Cytochrome c oxidase subunit 2 (229 aa).

Over 1–26 (MATWSNLGLQDSASPLMEQLNFFHDH) the chain is Mitochondrial intermembrane. Residues 27–48 (TLLILIMITILVGYLMLMLFFN) traverse the membrane as a helical segment. Residues 49–62 (KFTNRFLLHGQTIE) are Mitochondrial matrix-facing. The chain crosses the membrane as a helical span at residues 63–82 (IIWTILPAIVLMFIALPSLR). At 83 to 229 (ILYLLDEINS…IKWITAMNSN (147 aa)) the chain is on the mitochondrial intermembrane side. His-161, Cys-196, Glu-198, Cys-200, His-204, and Met-207 together coordinate Cu cation. Glu-198 provides a ligand contact to Mg(2+).

It belongs to the cytochrome c oxidase subunit 2 family. Component of the cytochrome c oxidase (complex IV, CIV), a multisubunit enzyme composed of a catalytic core of 3 subunits and several supernumerary subunits. The complex exists as a monomer or a dimer and forms supercomplexes (SCs) in the inner mitochondrial membrane with ubiquinol-cytochrome c oxidoreductase (cytochrome b-c1 complex, complex III, CIII). The cofactor is Cu cation.

Its subcellular location is the mitochondrion inner membrane. The catalysed reaction is 4 Fe(II)-[cytochrome c] + O2 + 8 H(+)(in) = 4 Fe(III)-[cytochrome c] + 2 H2O + 4 H(+)(out). Its function is as follows. Component of the cytochrome c oxidase, the last enzyme in the mitochondrial electron transport chain which drives oxidative phosphorylation. The respiratory chain contains 3 multisubunit complexes succinate dehydrogenase (complex II, CII), ubiquinol-cytochrome c oxidoreductase (cytochrome b-c1 complex, complex III, CIII) and cytochrome c oxidase (complex IV, CIV), that cooperate to transfer electrons derived from NADH and succinate to molecular oxygen, creating an electrochemical gradient over the inner membrane that drives transmembrane transport and the ATP synthase. Cytochrome c oxidase is the component of the respiratory chain that catalyzes the reduction of oxygen to water. Electrons originating from reduced cytochrome c in the intermembrane space (IMS) are transferred via the dinuclear copper A center (CU(A)) of subunit 2 and heme A of subunit 1 to the active site in subunit 1, a binuclear center (BNC) formed by heme A3 and copper B (CU(B)). The BNC reduces molecular oxygen to 2 water molecules using 4 electrons from cytochrome c in the IMS and 4 protons from the mitochondrial matrix. This Simulium vittatum (Striped black fly) protein is Cytochrome c oxidase subunit 2 (COII).